Here is a 304-residue protein sequence, read N- to C-terminus: uncharacterized protein (304 aa).

An N-terminal signal peptide occupies residues 1–22 (MKKSLTLLILLLCSLLFSTVLS). Residues 91–111 (PAPAPTPESSDPDEPMKPDDS) form a disordered region. N-linked (GlcNAc...) asparagine glycans are attached at residues Asn-133, Asn-160, Asn-183, and Asn-233. Ser-282 carries GPI-anchor amidated serine lipidation. Residues 283–304 (SSHLFGVLPFLPLVLCIFLFLL) constitute a propeptide, removed in mature form.

It localises to the cell membrane. This is an uncharacterized protein from Arabidopsis thaliana (Mouse-ear cress).